The primary structure comprises 464 residues: UDP-N-acetylmuramoylalanine--D-glutamate ligase (464 aa).

127–133 serves as a coordination point for ATP; sequence GSNGKST.

Belongs to the MurCDEF family.

The protein localises to the cytoplasm. The catalysed reaction is UDP-N-acetyl-alpha-D-muramoyl-L-alanine + D-glutamate + ATP = UDP-N-acetyl-alpha-D-muramoyl-L-alanyl-D-glutamate + ADP + phosphate + H(+). It participates in cell wall biogenesis; peptidoglycan biosynthesis. Cell wall formation. Catalyzes the addition of glutamate to the nucleotide precursor UDP-N-acetylmuramoyl-L-alanine (UMA). The polypeptide is UDP-N-acetylmuramoylalanine--D-glutamate ligase (Roseobacter denitrificans (strain ATCC 33942 / OCh 114) (Erythrobacter sp. (strain OCh 114))).